Reading from the N-terminus, the 147-residue chain is Small ribosomal subunit protein uS12 (147 aa).

Belongs to the universal ribosomal protein uS12 family. As to quaternary structure, part of the 30S ribosomal subunit.

Functionally, with S4 and S5 plays an important role in translational accuracy. Located at the interface of the 30S and 50S subunits. The chain is Small ribosomal subunit protein uS12 from Thermofilum pendens (strain DSM 2475 / Hrk 5).